Reading from the N-terminus, the 276-residue chain is MAIKKYKPTSAGVRGMSVLSFDEITKTTPEKSLTVSLNKSGGRNSYGRVTIRHRGGGAKRKYRIIDFKRNKDGIKAVVKSIEYDPNRTANIALLQYEDGEKRYIIQPVGLKVGDVVESGADVDIVPGNALPLRNIPVGTTVHNIEMKVGKGAQLVRTAGAEAQLMAKEGKFAQLRLPSGEFRLIHLDCKATVGQVGNISHELVTIGKAGRNRHLGKRPYVRGSAMNPVDHPHGGGEGRAPIGRPAPSTPWGKPALGLKTRKKNKKSNKYIVRRRKK.

The segment at 218 to 276 is disordered; that stretch reads PYVRGSAMNPVDHPHGGGEGRAPIGRPAPSTPWGKPALGLKTRKKNKKSNKYIVRRRKK. Residues 258–276 are compositionally biased toward basic residues; the sequence is KTRKKNKKSNKYIVRRRKK.

Belongs to the universal ribosomal protein uL2 family. As to quaternary structure, part of the 50S ribosomal subunit. Forms a bridge to the 30S subunit in the 70S ribosome.

Its function is as follows. One of the primary rRNA binding proteins. Required for association of the 30S and 50S subunits to form the 70S ribosome, for tRNA binding and peptide bond formation. It has been suggested to have peptidyltransferase activity; this is somewhat controversial. Makes several contacts with the 16S rRNA in the 70S ribosome. This is Large ribosomal subunit protein uL2 from Finegoldia magna (strain ATCC 29328 / DSM 20472 / WAL 2508) (Peptostreptococcus magnus).